Here is a 246-residue protein sequence, read N- to C-terminus: Peroxisomal membrane protein 11A (246 aa).

Over 1–93 (MDAFIRVANQ…LCLTLANLNR (93 aa)) the chain is Cytoplasmic. The helical transmembrane segment at 94 to 114 (VVYYICDTVLWAKSVGLTSGI) threads the bilayer. Residues 115 to 217 (NREKWQMRAA…LNQLGIYKSN (103 aa)) are Lumenal-facing. The helical transmembrane segment at 218–238 (LGVVGFGGLVSSVAGLITVVY) threads the bilayer. Positions 218 to 238 (LGVVGFGGLVSSVAGLITVVY) are required for homodimerization, interaction with PEX11G, and peroxisomal localization. The Cytoplasmic portion of the chain corresponds to 239–246 (PQLKLKAR).

The protein belongs to the peroxin-11 family. As to quaternary structure, homodimer. Heterodimer with PEX11G. Probably interacts with COPB2 and COPA. Interacts with PEX19. Interacts with FIS1. Expressed at high levels in kidney, liver, lung, brain, and testis and at low levels in heart, spleen and skeletal muscle.

Its subcellular location is the peroxisome membrane. In terms of biological role, may be involved in peroxisomal proliferation and may regulate peroxisomes division. May mediate binding of coatomer proteins to the peroxisomal membrane. Promotes membrane protrusion and elongation on the peroxisomal surface. This is Peroxisomal membrane protein 11A (Pex11a) from Rattus norvegicus (Rat).